The sequence spans 507 residues: ATP synthase subunit alpha, chloroplastic (507 aa).

170–177 is a binding site for ATP; it reads GDRQTGKT.

The protein belongs to the ATPase alpha/beta chains family. F-type ATPases have 2 components, CF(1) - the catalytic core - and CF(0) - the membrane proton channel. CF(1) has five subunits: alpha(3), beta(3), gamma(1), delta(1), epsilon(1). CF(0) has four main subunits: a, b, b' and c.

It localises to the plastid. The protein localises to the chloroplast thylakoid membrane. It catalyses the reaction ATP + H2O + 4 H(+)(in) = ADP + phosphate + 5 H(+)(out). Its function is as follows. Produces ATP from ADP in the presence of a proton gradient across the membrane. The alpha chain is a regulatory subunit. The polypeptide is ATP synthase subunit alpha, chloroplastic (Vitis vinifera (Grape)).